Consider the following 64-residue polypeptide: Metallothionein-like protein 1 (64 aa).

Belongs to the metallothionein superfamily. Type 15 family.

Functionally, metallothioneins have a high content of cysteine residues that bind various heavy metals. This chain is Metallothionein-like protein 1 (MT1), found in Prunus avium (Cherry).